The following is a 281-amino-acid chain: 2-dehydro-3-deoxyphosphooctonate aldolase (281 aa).

It belongs to the KdsA family.

It is found in the cytoplasm. It catalyses the reaction D-arabinose 5-phosphate + phosphoenolpyruvate + H2O = 3-deoxy-alpha-D-manno-2-octulosonate-8-phosphate + phosphate. The protein operates within carbohydrate biosynthesis; 3-deoxy-D-manno-octulosonate biosynthesis; 3-deoxy-D-manno-octulosonate from D-ribulose 5-phosphate: step 2/3. It participates in bacterial outer membrane biogenesis; lipopolysaccharide biosynthesis. This Pseudomonas aeruginosa (strain UCBPP-PA14) protein is 2-dehydro-3-deoxyphosphooctonate aldolase.